We begin with the raw amino-acid sequence, 151 residues long: uncharacterized protein (151 aa).

The next 3 helical transmembrane spans lie at 12-32, 59-79, and 114-134; these read LAYF…LFII, LAFL…YGLL, and YFAY…IAFG.

It localises to the cell membrane. This is an uncharacterized protein from Bacillus subtilis (strain 168).